The following is a 224-amino-acid chain: GTP cyclohydrolase 1 (224 aa).

Residues 1-20 (MKQEKTVSPTVENNRSAESR) form a disordered region. Cys-114, His-117, and Cys-185 together coordinate Zn(2+).

It belongs to the GTP cyclohydrolase I family. As to quaternary structure, toroid-shaped homodecamer, composed of two pentamers of five dimers.

It carries out the reaction GTP + H2O = 7,8-dihydroneopterin 3'-triphosphate + formate + H(+). It participates in cofactor biosynthesis; 7,8-dihydroneopterin triphosphate biosynthesis; 7,8-dihydroneopterin triphosphate from GTP: step 1/1. The polypeptide is GTP cyclohydrolase 1 (Chlorobaculum tepidum (strain ATCC 49652 / DSM 12025 / NBRC 103806 / TLS) (Chlorobium tepidum)).